The primary structure comprises 95 residues: Co-chaperonin GroES (95 aa).

Belongs to the GroES chaperonin family. In terms of assembly, heptamer of 7 subunits arranged in a ring. Interacts with the chaperonin GroEL.

The protein localises to the cytoplasm. Together with the chaperonin GroEL, plays an essential role in assisting protein folding. The GroEL-GroES system forms a nano-cage that allows encapsulation of the non-native substrate proteins and provides a physical environment optimized to promote and accelerate protein folding. GroES binds to the apical surface of the GroEL ring, thereby capping the opening of the GroEL channel. The polypeptide is Co-chaperonin GroES (Rickettsia prowazekii (strain Madrid E)).